Reading from the N-terminus, the 131-residue chain is Small ribosomal subunit protein uS12 (131 aa).

The tract at residues 1 to 22 (MPTTQQLLRKGRKVLQKKSKVP) is disordered. The span at 9 to 20 (RKGRKVLQKKSK) shows a compositional bias: basic residues. Position 89 is a 3-methylthioaspartic acid (D89). The interval 102–131 (LDTQGVKDRNKSRSKYGTKKPKAGAAAAKK) is disordered. Over residues 113-131 (SRSKYGTKKPKAGAAAAKK) the composition is skewed to basic residues.

It belongs to the universal ribosomal protein uS12 family. In terms of assembly, part of the 30S ribosomal subunit. Contacts proteins S8 and S17. May interact with IF1 in the 30S initiation complex.

Its function is as follows. With S4 and S5 plays an important role in translational accuracy. In terms of biological role, interacts with and stabilizes bases of the 16S rRNA that are involved in tRNA selection in the A site and with the mRNA backbone. Located at the interface of the 30S and 50S subunits, it traverses the body of the 30S subunit contacting proteins on the other side and probably holding the rRNA structure together. The combined cluster of proteins S8, S12 and S17 appears to hold together the shoulder and platform of the 30S subunit. The sequence is that of Small ribosomal subunit protein uS12 from Deinococcus radiodurans (strain ATCC 13939 / DSM 20539 / JCM 16871 / CCUG 27074 / LMG 4051 / NBRC 15346 / NCIMB 9279 / VKM B-1422 / R1).